A 430-amino-acid chain; its full sequence is Serine--tRNA ligase (430 aa).

237 to 239 provides a ligand contact to L-serine; it reads TAE. 268–270 is a binding site for ATP; the sequence is RAE. Residue Glu291 coordinates L-serine. 355–358 contributes to the ATP binding site; that stretch reads EVSS. Residue Ser391 coordinates L-serine.

It belongs to the class-II aminoacyl-tRNA synthetase family. Type-1 seryl-tRNA synthetase subfamily. In terms of assembly, homodimer. The tRNA molecule binds across the dimer.

It is found in the cytoplasm. The enzyme catalyses tRNA(Ser) + L-serine + ATP = L-seryl-tRNA(Ser) + AMP + diphosphate + H(+). The catalysed reaction is tRNA(Sec) + L-serine + ATP = L-seryl-tRNA(Sec) + AMP + diphosphate + H(+). Its pathway is aminoacyl-tRNA biosynthesis; selenocysteinyl-tRNA(Sec) biosynthesis; L-seryl-tRNA(Sec) from L-serine and tRNA(Sec): step 1/1. Catalyzes the attachment of serine to tRNA(Ser). Is also able to aminoacylate tRNA(Sec) with serine, to form the misacylated tRNA L-seryl-tRNA(Sec), which will be further converted into selenocysteinyl-tRNA(Sec). This is Serine--tRNA ligase from Baumannia cicadellinicola subsp. Homalodisca coagulata.